The sequence spans 73 residues: uncharacterized protein (73 aa).

Residues 1–22 (MKILGVTGFILICLLAISVLMD) form the signal peptide. Residues 44 to 66 (TFAEWVVLLFFVLVLVREMYVIY) traverse the membrane as a helical segment.

Its subcellular location is the membrane. This is an uncharacterized protein from Bacillus subtilis (strain 168).